Here is a 197-residue protein sequence, read N- to C-terminus: dITP/XTP pyrophosphatase (197 aa).

Residue 8–13 participates in substrate binding; sequence TGNPGK. Residues glutamate 40 and aspartate 69 each contribute to the Mg(2+) site. Aspartate 69 (proton acceptor) is an active-site residue. Substrate is bound by residues serine 70, 154 to 157, lysine 177, and 182 to 183; these read FGYD and HR.

It belongs to the HAM1 NTPase family. In terms of assembly, homodimer. Mg(2+) serves as cofactor.

It catalyses the reaction XTP + H2O = XMP + diphosphate + H(+). It carries out the reaction dITP + H2O = dIMP + diphosphate + H(+). The catalysed reaction is ITP + H2O = IMP + diphosphate + H(+). Functionally, pyrophosphatase that catalyzes the hydrolysis of nucleoside triphosphates to their monophosphate derivatives, with a high preference for the non-canonical purine nucleotides XTP (xanthosine triphosphate), dITP (deoxyinosine triphosphate) and ITP. Seems to function as a house-cleaning enzyme that removes non-canonical purine nucleotides from the nucleotide pool, thus preventing their incorporation into DNA/RNA and avoiding chromosomal lesions. The sequence is that of dITP/XTP pyrophosphatase from Pectobacterium atrosepticum (strain SCRI 1043 / ATCC BAA-672) (Erwinia carotovora subsp. atroseptica).